Reading from the N-terminus, the 748-residue chain is Peptidyl serine alpha-galactosyltransferase (748 aa).

A signal peptide spans 1–26 (MVAVFHGPLVLGALLLLLALQHGASA). At 27–710 (EEPGFANRTG…GPSLHSLLGR (684 aa)) the chain is on the extracellular side. Residues Asn33, Asn184, and Asn297 are each glycosylated (N-linked (GlcNAc...) asparagine). In terms of domain architecture, ShKT spans 415–449 (CQDFHPKCEEWKESGECTKNENYMTENCRKTCDKC). 3 cysteine pairs are disulfide-bonded: Cys415-Cys449, Cys422-Cys442, and Cys431-Cys446. Disordered regions lie at residues 474–576 (ELQP…ADPK) and 611–670 (EVPK…KKNI). Positions 531-565 (SPPPSPPPASPPPVDSPPPMSPPPESPSPDKPPPK) are enriched in pro residues. Basic and acidic residues predominate over residues 611–637 (EVPKRTKATDEEEEAPKAKHAESHLTL). A helical transmembrane segment spans residues 711 to 731 (LNTWQALVLWLVVVVAFLALV). Over 732 to 748 (PRIAKLRRRQRSGMRTE) the chain is Cytoplasmic.

Requires Mn(2+) as cofactor.

It localises to the membrane. Glycosyltransferase involved in the O-galactosylation of several proteins including extensins. Catalyzes the transfer of alpha-galactosyl to Ser residues. Hydroxylation of proline residues adjacent to the serine acceptor is required for activity. Utilizes selectively UDP-galactose as a donor nucleotide sugar. This is Peptidyl serine alpha-galactosyltransferase from Chlamydomonas reinhardtii (Chlamydomonas smithii).